We begin with the raw amino-acid sequence, 414 residues long: Tryptophan synthase beta chain (414 aa).

Residues 1-12 (MVSTISRHDQNK) are compositionally biased toward basic and acidic residues. Residues 1 to 23 (MVSTISRHDQNKNNDYLNQPSKE) form a disordered region. Residue lysine 109 is modified to N6-(pyridoxal phosphate)lysine.

Belongs to the TrpB family. In terms of assembly, tetramer of two alpha and two beta chains. The cofactor is pyridoxal 5'-phosphate.

The enzyme catalyses (1S,2R)-1-C-(indol-3-yl)glycerol 3-phosphate + L-serine = D-glyceraldehyde 3-phosphate + L-tryptophan + H2O. The protein operates within amino-acid biosynthesis; L-tryptophan biosynthesis; L-tryptophan from chorismate: step 5/5. The beta subunit is responsible for the synthesis of L-tryptophan from indole and L-serine. The sequence is that of Tryptophan synthase beta chain from Prochlorococcus marinus (strain MIT 9515).